The primary structure comprises 278 residues: Large ribosomal subunit protein uL2 (278 aa).

Disordered stretches follow at residues Thr-28–His-58 and Gly-223–Arg-278. Residues Arg-43–His-53 show a composition bias toward polar residues. Residues Ile-268 to Arg-278 show a composition bias toward basic residues.

The protein belongs to the universal ribosomal protein uL2 family. In terms of assembly, part of the 50S ribosomal subunit. Forms a bridge to the 30S subunit in the 70S ribosome.

Functionally, one of the primary rRNA binding proteins. Required for association of the 30S and 50S subunits to form the 70S ribosome, for tRNA binding and peptide bond formation. It has been suggested to have peptidyltransferase activity; this is somewhat controversial. Makes several contacts with the 16S rRNA in the 70S ribosome. The polypeptide is Large ribosomal subunit protein uL2 (Nocardioides sp. (strain ATCC BAA-499 / JS614)).